The chain runs to 166 residues: Small ribosomal subunit protein uS5 (166 aa).

One can recognise an S5 DRBM domain in the interval 11-74; the sequence is LIEKLVSVKR…ENAKKNMVSV (64 aa).

It belongs to the universal ribosomal protein uS5 family. Part of the 30S ribosomal subunit. Contacts proteins S4 and S8.

Its function is as follows. With S4 and S12 plays an important role in translational accuracy. In terms of biological role, located at the back of the 30S subunit body where it stabilizes the conformation of the head with respect to the body. The sequence is that of Small ribosomal subunit protein uS5 from Francisella tularensis subsp. tularensis (strain FSC 198).